The primary structure comprises 405 residues: Formate-dependent phosphoribosylglycinamide formyltransferase (405 aa).

Residues 22–23 and E82 contribute to the N(1)-(5-phospho-beta-D-ribosyl)glycinamide site; that span reads EL. ATP is bound by residues R115, K162, 167-172, 202-205, and E210; these read SSGKGQ and EGFI. Positions 120–320 constitute an ATP-grasp domain; sequence RLAAETLGLP…EFELHARAIL (201 aa). 2 residues coordinate Mg(2+): E279 and E291. Residues D298, K367, and 374–375 contribute to the N(1)-(5-phospho-beta-D-ribosyl)glycinamide site; that span reads RR.

It belongs to the PurK/PurT family. As to quaternary structure, homodimer.

The enzyme catalyses N(1)-(5-phospho-beta-D-ribosyl)glycinamide + formate + ATP = N(2)-formyl-N(1)-(5-phospho-beta-D-ribosyl)glycinamide + ADP + phosphate + H(+). Its pathway is purine metabolism; IMP biosynthesis via de novo pathway; N(2)-formyl-N(1)-(5-phospho-D-ribosyl)glycinamide from N(1)-(5-phospho-D-ribosyl)glycinamide (formate route): step 1/1. Its function is as follows. Involved in the de novo purine biosynthesis. Catalyzes the transfer of formate to 5-phospho-ribosyl-glycinamide (GAR), producing 5-phospho-ribosyl-N-formylglycinamide (FGAR). Formate is provided by PurU via hydrolysis of 10-formyl-tetrahydrofolate. This chain is Formate-dependent phosphoribosylglycinamide formyltransferase, found in Leptothrix cholodnii (strain ATCC 51168 / LMG 8142 / SP-6) (Leptothrix discophora (strain SP-6)).